Consider the following 807-residue polypeptide: PGC-1 and ERR-induced regulator in muscle protein 1 (807 aa).

Disordered regions lie at residues 29–80 (QADL…EDVA), 121–391 (CPGQ…TPAS), and 517–548 (PSHEDSGSGEPTGSPFLTPEQPPVPRTAAGSR). Low complexity-rich tracts occupy residues 40–52 (SSDIDQGDSSGSS) and 145–160 (PAPSSPSKAPHSPESP). The segment covering 162–171 (HSDNPQSSPD) has biased composition (polar residues). A compositionally biased stretch (basic residues) spans 180 to 194 (PGRKKRRAVGAKGTK). Polar residues-rich tracts occupy residues 195 to 211 (HSGSLDSAATQMSSPQL), 311 to 346 (KPQSDIASSTHPFTPDVSLSTLAFKCQPNTNQSTPA), and 363 to 391 (ALSTPASEPDTALSTPASEPDTALSTPAS). Phosphoserine is present on S198. T534 bears the Phosphothreonine mark. R548 is modified (omega-N-methylarginine).

Highly expressed in skeletal muscles and heart with lower levels in brown adipose tissue (at protein level). Muscle-specific expression is increased by endurance exercise.

The protein localises to the cytoplasm. The protein resides in the nucleus. Functionally, regulates the expression of selective PPARGC1A/B and ESRRA/B/G target genes with roles in glucose and lipid metabolism, energy transfer, contractile function, muscle mitochondrial biogenesis and oxidative capacity. Required for the efficient induction of MT-CO2, MT-CO3, COX4I1, TFB1M, TFB2M, POLRMT and SIRT3 by PPARGC1A. Positively regulates the PPARGC1A/ESRRG-induced expression of CKMT2, TNNI3 and SLC2A4 and negatively regulates the PPARGC1A/ESRRG-induced expression of PDK4. The polypeptide is PGC-1 and ERR-induced regulator in muscle protein 1 (Perm1) (Mus musculus (Mouse)).